The following is a 205-amino-acid chain: MIAHLRGELVTAGADWVVIDVAGVGYRCLVPASTRSRLPAQGAAVQLYTYLQVREDALTLYGFLTQAEYDLFELLLRVDGVGPKVALAVLSTTDPAAFRRAVAFEDLDAICRVPGIGRKTAQRLVLELKDKIGAVPAGGGGVPDGLPVAVAPAGDAWAEASEALIALGYSRGEAAAALARVRAEAGEAPSVETLVRLALKQLYRG.

Residues 1–64 (MIAHLRGELV…EDALTLYGFL (64 aa)) are domain I. The interval 65–143 (TQAEYDLFEL…AVPAGGGGVP (79 aa)) is domain II. The interval 144–153 (DGLPVAVAPA) is flexible linker. Positions 153-205 (AGDAWAEASEALIALGYSRGEAAAALARVRAEAGEAPSVETLVRLALKQLYRG) are domain III.

Belongs to the RuvA family. As to quaternary structure, homotetramer. Forms an RuvA(8)-RuvB(12)-Holliday junction (HJ) complex. HJ DNA is sandwiched between 2 RuvA tetramers; dsDNA enters through RuvA and exits via RuvB. An RuvB hexamer assembles on each DNA strand where it exits the tetramer. Each RuvB hexamer is contacted by two RuvA subunits (via domain III) on 2 adjacent RuvB subunits; this complex drives branch migration. In the full resolvosome a probable DNA-RuvA(4)-RuvB(12)-RuvC(2) complex forms which resolves the HJ.

Its subcellular location is the cytoplasm. Functionally, the RuvA-RuvB-RuvC complex processes Holliday junction (HJ) DNA during genetic recombination and DNA repair, while the RuvA-RuvB complex plays an important role in the rescue of blocked DNA replication forks via replication fork reversal (RFR). RuvA specifically binds to HJ cruciform DNA, conferring on it an open structure. The RuvB hexamer acts as an ATP-dependent pump, pulling dsDNA into and through the RuvAB complex. HJ branch migration allows RuvC to scan DNA until it finds its consensus sequence, where it cleaves and resolves the cruciform DNA. This Symbiobacterium thermophilum (strain DSM 24528 / JCM 14929 / IAM 14863 / T) protein is Holliday junction branch migration complex subunit RuvA.